A 129-amino-acid polypeptide reads, in one-letter code: UPF0325 protein SG1947 (129 aa).

The protein belongs to the UPF0325 family.

This is UPF0325 protein SG1947 from Sodalis glossinidius (strain morsitans).